We begin with the raw amino-acid sequence, 219 residues long: Dehydration-responsive element-binding protein 1E (219 aa).

Residues 1–19 (MEWAYYGSGYSSSGTPSPV) show a composition bias toward low complexity. The interval 1–44 (MEWAYYGSGYSSSGTPSPVGGDGDEDSYMTVSSAPPKRRAGRTK) is disordered. Residues 52–109 (VYKGVRSRNPGRWVCEVREPHGKQRIWLGTFETAEMAARAHDVAAMALRGRAACLNFA) constitute a DNA-binding region (AP2/ERF).

The protein belongs to the AP2/ERF transcription factor family. ERF subfamily.

It is found in the nucleus. Transcriptional activator that binds specifically to the DNA sequence 5'-[AG]CCGAC-3'. Binding to the C-repeat/DRE element mediates high salinity- and dehydration-inducible transcription. The polypeptide is Dehydration-responsive element-binding protein 1E (DREB1E) (Oryza sativa subsp. indica (Rice)).